Reading from the N-terminus, the 163-residue chain is Transmembrane protein 278 (163 aa).

Residues methionine 1–threonine 37 are disordered. 2 consecutive transmembrane segments (helical) span residues leucine 51–leucine 71 and alanine 105–valine 125. The span at leucine 136–arginine 148 shows a compositional bias: pro residues. Residues leucine 136–aspartate 156 are disordered.

It belongs to the TMEM88 family.

Its subcellular location is the membrane. The protein is Transmembrane protein 278 of Homo sapiens (Human).